Reading from the N-terminus, the 201-residue chain is MINSFIVIFLSFLIFINYANLVCVEATHVYGRRSHSNGMHGNGARRAVAVLRGDAGVSGIIYFQQGSGGSITTISGSVSGLTPGLHGFHVHQYGDQTNGCTSAGDHYNPFGKTHGGPNDRIKHIGDLGNIVAGANGVAEVYINSYDIKLRGPLSVIGHSLVVHANTDDLGQGTGNMREESLKTGNAGSRLACGVIGIAAVS.

Positions 1–42 (MINSFIVIFLSFLIFINYANLVCVEATHVYGRRSHSNGMHGN) are cleaved as a signal peptide. H89, H91, and H106 together coordinate Cu cation. C100 and C192 are oxidised to a cystine. Positions 106, 114, 123, and 126 each coordinate Zn(2+). H163 is a binding site for Cu cation.

This sequence belongs to the Cu-Zn superoxide dismutase family. Homodimer. It depends on Cu cation as a cofactor. Requires Zn(2+) as cofactor.

Its subcellular location is the secreted. The protein resides in the extracellular space. It catalyses the reaction 2 superoxide + 2 H(+) = H2O2 + O2. In terms of biological role, destroys radicals which are normally produced within the cells and which are toxic to biological systems. May act in the parasite defense against phagocyte-generated reactive oxygen species. The protein is Extracellular superoxide dismutase [Cu-Zn] (sod-4) of Onchocerca volvulus.